The primary structure comprises 629 residues: Serine/threonine-protein kinase ICK (629 aa).

The 281-residue stretch at Y4–F284 folds into the Protein kinase domain. Residues L10–V18 and K33 contribute to the ATP site. Catalysis depends on D125, which acts as the Proton acceptor. T157 carries the post-translational modification Phosphothreonine. A Phosphotyrosine modification is found at Y159. Phosphoserine is present on S161. Disordered stretches follow at residues I292 to A322, P454 to A482, and G579 to R629. The span at G309–Q321 shows a compositional bias: pro residues. A compositionally biased stretch (polar residues) spans T460–A482.

The protein belongs to the protein kinase superfamily. CMGC Ser/Thr protein kinase family. CDC2/CDKX subfamily. It depends on Mg(2+) as a cofactor. Autophosphorylated on serine and threonine residues. Phosphorylation at Thr-157 increases kinase activity. In terms of tissue distribution, expressed in embryonic heart from day 11. Highly expressed in the uterus and at lower levels in brain, heart, lung, kidney, skeletal muscle, ovary and liver in adult tissues.

The protein localises to the cytoplasm. Its subcellular location is the cell projection. It is found in the cilium. The protein resides in the nucleus. It localises to the cytoskeleton. The protein localises to the cilium basal body. It catalyses the reaction L-seryl-[protein] + ATP = O-phospho-L-seryl-[protein] + ADP + H(+). The catalysed reaction is L-threonyl-[protein] + ATP = O-phospho-L-threonyl-[protein] + ADP + H(+). In terms of biological role, required for ciliogenesis, particularly in neuronal and retinal progenitor cells. Phosphorylates KIF3A. Involved in the control of ciliary length. Regulates the ciliary localization of SHH pathway components as well as the localization of IFT components at ciliary tips. May play a role in cardiac development. Regulates intraflagellar transport (IFT) speed and negatively regulates cilium length in a cAMP and mTORC1 signaling-dependent manner and this regulation requires its kinase activity. The sequence is that of Serine/threonine-protein kinase ICK (Cilk1) from Rattus norvegicus (Rat).